The following is a 545-amino-acid chain: Chaperonin GroEL (545 aa).

ATP is bound by residues 30–33, lysine 51, 87–91, glycine 415, and aspartate 495; these read TLGP and DGTTT.

Belongs to the chaperonin (HSP60) family. Forms a cylinder of 14 subunits composed of two heptameric rings stacked back-to-back. Interacts with the co-chaperonin GroES.

The protein localises to the cytoplasm. The catalysed reaction is ATP + H2O + a folded polypeptide = ADP + phosphate + an unfolded polypeptide.. In terms of biological role, together with its co-chaperonin GroES, plays an essential role in assisting protein folding. The GroEL-GroES system forms a nano-cage that allows encapsulation of the non-native substrate proteins and provides a physical environment optimized to promote and accelerate protein folding. The chain is Chaperonin GroEL from Shewanella sp. (strain W3-18-1).